The primary structure comprises 283 residues: Putative S-adenosyl-L-methionine-dependent methyltransferase SCO7813 (283 aa).

S-adenosyl-L-methionine contacts are provided by residues aspartate 121 and 150 to 151 (DL). Residues 264–283 (MSTLPQHEDGPGGLISAVRR) are disordered.

It belongs to the UPF0677 family.

In terms of biological role, exhibits S-adenosyl-L-methionine-dependent methyltransferase activity. This Streptomyces coelicolor (strain ATCC BAA-471 / A3(2) / M145) protein is Putative S-adenosyl-L-methionine-dependent methyltransferase SCO7813.